The chain runs to 420 residues: Putative kinase Y4mE (420 aa).

Residue Asp302 is the Proton acceptor of the active site.

The protein belongs to the HipA Ser/Thr kinase family.

The polypeptide is Putative kinase Y4mE (Sinorhizobium fredii (strain NBRC 101917 / NGR234)).